Here is a 227-residue protein sequence, read N- to C-terminus: Protein FAM3C (227 aa).

The first 24 residues, 1 to 24, serve as a signal peptide directing secretion; sequence MRVAGAAKLVVAVAVFLLTFYVIS. 2 disulfides stabilise this stretch: cysteine 58–cysteine 86 and cysteine 64–cysteine 221. One can recognise a GG-type lectin domain in the interval 67 to 225; it reads KHFAFKMASG…VEMEGCIPQK (159 aa).

This sequence belongs to the FAM3 family.

The protein localises to the secreted. The protein resides in the cytoplasmic vesicle. In terms of biological role, may be involved in retinal laminar formation. Promotes epithelial to mesenchymal transition. This Bos taurus (Bovine) protein is Protein FAM3C (FAM3C).